Reading from the N-terminus, the 206-residue chain is Probable peptidyl-tRNA hydrolase (206 aa).

Residue His48 is the Proton acceptor of the active site. Positions 83, 85, and 137 each coordinate tRNA.

This sequence belongs to the PTH family.

The protein localises to the mitochondrion. It carries out the reaction an N-acyl-L-alpha-aminoacyl-tRNA + H2O = an N-acyl-L-amino acid + a tRNA + H(+). Functionally, peptidyl-tRNA hydrolase involved in the recycling of tRNA-Lys from diacetyl-lysyl-tRNA-Lys and is important for mitochondrial function. This is Probable peptidyl-tRNA hydrolase (pth1) from Schizosaccharomyces pombe (strain 972 / ATCC 24843) (Fission yeast).